Consider the following 90-residue polypeptide: Small ribosomal subunit protein uS15c (90 aa).

The protein belongs to the universal ribosomal protein uS15 family. In terms of assembly, part of the 30S ribosomal subunit.

Its subcellular location is the plastid. It is found in the chloroplast. The sequence is that of Small ribosomal subunit protein uS15c (rps15) from Mesostigma viride (Green alga).